A 331-amino-acid chain; its full sequence is MMRNVLLLCGGGSSEHEISLLSSEYLQQQLGLIENVNVLKVEIKNEGWFDQKERLVYLDIHTKSVKSDEFNESIDIDFIVPCIHGFPGETGDIQSLFELAGIPYLGCGPEASSNSFNKITSKLWYDAIGIPNTPYLFLTENNEESHQLSREAFDKWGKLFVKAARQGSSVGCYSVTNIEQLSDAIDKAFGFSHQVLVEKAVKPRELEVSAYEMNGQLHISKPGEIIAPDGAFYSYDEKYSAGSHSITEVEAKNLTEQQLATIQLCSEKVFRQMNLRHLSRIDFFLTSEGEIYLNEVNTFPGMTKISMFPKMLQHNGHKFHEFLADCIERSL.

An ATP-grasp domain is found at 122–328 (KLWYDAIGIP…FHEFLADCIE (207 aa)). 152-207 (AFDKWGKLFVKAARQGSSVGCYSVTNIEQLSDAIDKAFGFSHQVLVEKAVKPRELE) is a binding site for ATP. Positions 282, 295, and 297 each coordinate Mg(2+).

It belongs to the D-alanine--D-alanine ligase family. It depends on Mg(2+) as a cofactor. Mn(2+) serves as cofactor.

Its subcellular location is the cytoplasm. It catalyses the reaction 2 D-alanine + ATP = D-alanyl-D-alanine + ADP + phosphate + H(+). Its pathway is cell wall biogenesis; peptidoglycan biosynthesis. In terms of biological role, cell wall formation. This Vibrio vulnificus (strain YJ016) protein is D-alanine--D-alanine ligase.